A 406-amino-acid chain; its full sequence is Phosphopentomutase (406 aa).

The Mn(2+) site is built by D10, D305, H310, D346, H347, and H358.

This sequence belongs to the phosphopentomutase family. It depends on Mn(2+) as a cofactor.

Its subcellular location is the cytoplasm. The catalysed reaction is 2-deoxy-alpha-D-ribose 1-phosphate = 2-deoxy-D-ribose 5-phosphate. It carries out the reaction alpha-D-ribose 1-phosphate = D-ribose 5-phosphate. It participates in carbohydrate degradation; 2-deoxy-D-ribose 1-phosphate degradation; D-glyceraldehyde 3-phosphate and acetaldehyde from 2-deoxy-alpha-D-ribose 1-phosphate: step 1/2. In terms of biological role, isomerase that catalyzes the conversion of deoxy-ribose 1-phosphate (dRib-1-P) and ribose 1-phosphate (Rib-1-P) to deoxy-ribose 5-phosphate (dRib-5-P) and ribose 5-phosphate (Rib-5-P), respectively. The sequence is that of Phosphopentomutase from Vibrio campbellii (strain ATCC BAA-1116).